We begin with the raw amino-acid sequence, 715 residues long: Elongation factor G (715 aa).

The tr-type G domain maps to 8 to 290; the sequence is NRYRNIGICA…AVIDFLPAPT (283 aa). Residues 17–24, 88–92, and 142–145 each bind GTP; these read AHVDAGKT, DTPGH, and NKMD.

This sequence belongs to the TRAFAC class translation factor GTPase superfamily. Classic translation factor GTPase family. EF-G/EF-2 subfamily.

The protein localises to the cytoplasm. In terms of biological role, catalyzes the GTP-dependent ribosomal translocation step during translation elongation. During this step, the ribosome changes from the pre-translocational (PRE) to the post-translocational (POST) state as the newly formed A-site-bound peptidyl-tRNA and P-site-bound deacylated tRNA move to the P and E sites, respectively. Catalyzes the coordinated movement of the two tRNA molecules, the mRNA and conformational changes in the ribosome. This is Elongation factor G from Pseudomonas fluorescens (strain ATCC BAA-477 / NRRL B-23932 / Pf-5).